A 915-amino-acid polypeptide reads, in one-letter code: DNA (cytosine-5)-methyltransferase 3 (915 aa).

The segment covering 1–14 (MAPSSPSSARPTRA) has biased composition (low complexity). Disordered regions lie at residues 1–107 (MAPS…AEEQ) and 152–171 (HSNW…PEED). Residues 21–30 (AMAEEIHQNQ) show a composition bias toward basic and acidic residues. Residues 42–57 (AKRRRKAASSGKKPKP) are compositionally biased toward basic residues. Residues 71–80 (KKGETEKTEP) show a composition bias toward basic and acidic residues. Residues 81–107 (VVDDVCAEEPDEEELAMGEEEAEAEEQ) are compositionally biased toward acidic residues. The 126-residue stretch at 188 to 313 (IVYCLGDDVY…VAYSTFANIS (126 aa)) folds into the BAH domain. The span at 315 to 328 (ENGQSGSETASGIS) shows a compositional bias: polar residues. Positions 315 to 338 (ENGQSGSETASGISSDDAGLETSS) are disordered. The region spanning 345-876 (ATLLDLYSGC…YCLGQAYLGE (532 aa)) is the SAM-dependent MTase C5-type domain. The Chromo domain occupies 445 to 508 (FVVQKLIGIR…EGRKRKILPL (64 aa)). Residue Cys521 is part of the active site.

This sequence belongs to the class I-like SAM-binding methyltransferase superfamily. C5-methyltransferase family.

It localises to the nucleus. It catalyses the reaction a 2'-deoxycytidine in DNA + S-adenosyl-L-methionine = a 5-methyl-2'-deoxycytidine in DNA + S-adenosyl-L-homocysteine + H(+). May be involved in the CpXpG methylation and in gene silencing. The protein is DNA (cytosine-5)-methyltransferase 3 (DMT105) of Zea mays (Maize).